The sequence spans 628 residues: Chaperone protein HtpG (628 aa).

Residues methionine 1–arginine 337 form an a; substrate-binding region. The tract at residues glutamate 338 to lysine 554 is b. Residues methionine 555 to arginine 628 are c.

The protein belongs to the heat shock protein 90 family. As to quaternary structure, homodimer.

The protein resides in the cytoplasm. Functionally, molecular chaperone. Has ATPase activity. This is Chaperone protein HtpG from Francisella tularensis subsp. holarctica (strain FTNF002-00 / FTA).